A 443-amino-acid polypeptide reads, in one-letter code: Acyl transferase 10 (443 aa).

Residues H182 and D386 each act as proton acceptor in the active site.

This sequence belongs to the plant acyltransferase family.

Its function is as follows. Involved in the incorporation of ferulate into the cell wall. May act as arabinoxylan feruloyl transferase. May function as p-coumaroyl-CoA transferase involved in glucuronoarabinoxylan modification. The protein is Acyl transferase 10 of Oryza sativa subsp. japonica (Rice).